The chain runs to 519 residues: Na(+)/H(+) exchange regulatory cofactor NHE-RF3 (519 aa).

In terms of domain architecture, PDZ 1 spans 9–90 (ECKLSKQEGQ…SVTLLVLDGD (82 aa)). 6 positions are modified to phosphoserine: Ser-108, Ser-148, Ser-192, Ser-250, Ser-334, and Ser-348. PDZ domains follow at residues 134–215 (RLCY…VDKE) and 243–323 (IVEM…VDKE). Residues 347–374 (GSVKEAPAPTPTSLEVSSPPDTTEEVDH) are disordered. The span at 357 to 367 (PTSLEVSSPPD) shows a compositional bias: polar residues. In terms of domain architecture, PDZ 4 spans 378-458 (LCRLAKGENG…NVTLLVCGKK (81 aa)). Thr-451 carries the phosphothreonine modification. Residues 479–519 (DTPPDSKEGIVVESNHDSHMAKERAHSTASHSSSNSEDTEM) form a disordered region. Residues 482–504 (PDSKEGIVVESNHDSHMAKERAH) show a composition bias toward basic and acidic residues. Residues Ser-492, Ser-508, Ser-510, Ser-511, Ser-512, and Ser-514 each carry the phosphoserine modification. Residues 505–519 (STASHSSSNSEDTEM) show a composition bias toward low complexity.

It belongs to the NHER family. As to quaternary structure, interacts with PDZK1IP1 and ABCC2. Interacts (via PDZ domains 1 and 3) with SCARB1 (C-terminal domain). Forms a heterodimeric complex with NHERF1. Interacts with AKAP2, BCR, CFTR, SLC22A12, SLC22A4, SLC22A5, NHERF2 and SLC17A1. Component of a complex, composed of PDZK1, SYNGAP1, KLHL17 and NMDA receptors. Interacts (via PDZ1 domain) directly with KLHL17; the interaction is important for integrity of actin cytoskeleton structures in neurons. Interacts (via the first PDZ domain) with PTGIR (via non-isoprenylated C-terminus). Interacts (via C-terminal PDZ domain) with SLC26A6 (via C-terminal domain). Interacts (via C-terminal PDZ domain) with SLC9A3 (via C-terminal domain). Interacts (via PDZ domains 1 and 3) with SLC5A8 (via PDZ-binding motif); interaction increases nicotinate transport activity of SLC5A8. In terms of tissue distribution, expression is limited to epithelial cells. Expressed in the kidney (brush border of proximal tubule), pancreas, liver, and small intestine. Expressed at a lower level in the adrenal cortex, testis and stomach. Overexpressed in breast, renal and lung carcinomas.

The protein localises to the membrane. The protein resides in the cell membrane. Functionally, a scaffold protein that connects plasma membrane proteins and regulatory components, regulating their surface expression in epithelial cells apical domains. May be involved in the coordination of a diverse range of regulatory processes for ion transport and second messenger cascades. In complex with NHERF1, may cluster proteins that are functionally dependent in a mutual fashion and modulate the trafficking and the activity of the associated membrane proteins. May play a role in the cellular mechanisms associated with multidrug resistance through its interaction with ABCC2 and PDZK1IP1. May potentiate the CFTR chloride channel activity. Required for normal cell-surface expression of SCARB1. Plays a role in maintaining normal plasma cholesterol levels via its effects on SCARB1. Plays a role in the normal localization and function of the chloride-anion exchanger SLC26A6 to the plasma membrane in the brush border of the proximal tubule of the kidney. May be involved in the regulation of proximal tubular Na(+)-dependent inorganic phosphate cotransport therefore playing an important role in tubule function. In Homo sapiens (Human), this protein is Na(+)/H(+) exchange regulatory cofactor NHE-RF3 (PDZK1).